The chain runs to 761 residues: 1,4-alpha-glucan branching enzyme GlgB (761 aa).

Asp-431 acts as the Nucleophile in catalysis. Glu-484 serves as the catalytic Proton donor.

This sequence belongs to the glycosyl hydrolase 13 family. GlgB subfamily. In terms of assembly, monomer.

It catalyses the reaction Transfers a segment of a (1-&gt;4)-alpha-D-glucan chain to a primary hydroxy group in a similar glucan chain.. It participates in glycan biosynthesis; glycogen biosynthesis. Catalyzes the formation of the alpha-1,6-glucosidic linkages in glycogen by scission of a 1,4-alpha-linked oligosaccharide from growing alpha-1,4-glucan chains and the subsequent attachment of the oligosaccharide to the alpha-1,6 position. The sequence is that of 1,4-alpha-glucan branching enzyme GlgB from Synechococcus sp. (strain WH7803).